Here is a 133-residue protein sequence, read N- to C-terminus: Ribulose bisphosphate carboxylase small subunit (133 aa).

This sequence belongs to the RuBisCO small chain family. As to quaternary structure, heterohexadecamer of 8 large and 8 small subunits.

In terms of biological role, ruBisCO catalyzes two reactions: the carboxylation of D-ribulose 1,5-bisphosphate, the primary event in carbon dioxide fixation, as well as the oxidative fragmentation of the pentose substrate. Both reactions occur simultaneously and in competition at the same active site. Although the small subunit is not catalytic it is essential for maximal activity. The polypeptide is Ribulose bisphosphate carboxylase small subunit (Xanthobacter flavus).